The primary structure comprises 362 residues: Dihydroorotate dehydrogenase (quinone) (362 aa).

Residues alanine 62–lysine 66 and threonine 86 contribute to the FMN site. Residue lysine 66 coordinates substrate. Asparagine 111–phenylalanine 115 provides a ligand contact to substrate. Residues asparagine 139 and asparagine 170 each coordinate FMN. A substrate-binding site is contributed by asparagine 170. Serine 173 acts as the Nucleophile in catalysis. A substrate-binding site is contributed by asparagine 175. Positions 215 and 243 each coordinate FMN. Asparagine 244–threonine 245 contacts substrate. Residues glycine 266, glycine 295, and tyrosine 316 to serine 317 contribute to the FMN site.

It belongs to the dihydroorotate dehydrogenase family. Type 2 subfamily. In terms of assembly, monomer. The cofactor is FMN.

It localises to the cell membrane. It carries out the reaction (S)-dihydroorotate + a quinone = orotate + a quinol. It participates in pyrimidine metabolism; UMP biosynthesis via de novo pathway; orotate from (S)-dihydroorotate (quinone route): step 1/1. Catalyzes the conversion of dihydroorotate to orotate with quinone as electron acceptor. This chain is Dihydroorotate dehydrogenase (quinone), found in Rhizobium johnstonii (strain DSM 114642 / LMG 32736 / 3841) (Rhizobium leguminosarum bv. viciae).